The following is a 287-amino-acid chain: Oxaloacetate decarboxylase (287 aa).

Residue Ser-50 participates in substrate binding. Asp-88 serves as a coordination point for Mg(2+). Positions 159 and 235 each coordinate substrate.

This sequence belongs to the isocitrate lyase/PEP mutase superfamily. Oxaloacetate decarboxylase family. In terms of assembly, homotetramer; dimer of dimers. Mg(2+) is required as a cofactor.

The catalysed reaction is oxaloacetate + H(+) = pyruvate + CO2. Its function is as follows. Catalyzes the decarboxylation of oxaloacetate into pyruvate. Seems to play a role in maintaining cellular concentrations of bicarbonate and pyruvate. This chain is Oxaloacetate decarboxylase, found in Chromohalobacter salexigens (strain ATCC BAA-138 / DSM 3043 / CIP 106854 / NCIMB 13768 / 1H11).